The primary structure comprises 66 residues: uncharacterized protein (66 aa).

This is an uncharacterized protein from Enterobacteria phage T4 (Bacteriophage T4).